A 299-amino-acid polypeptide reads, in one-letter code: Protoheme IX farnesyltransferase (299 aa).

Helical transmembrane passes span 29-49, 51-71, 100-120, 123-143, 150-170, 177-197, 223-243, 244-264, and 275-295; these read VVTL…PGAV, LQPL…AAAM, HAAT…YWLV, LTAW…TAYL, NIVI…TAVT, GLLL…ALAI, CIFL…LVGM, SGAL…YKAW, and AMDV…LLLV.

The protein belongs to the UbiA prenyltransferase family. Protoheme IX farnesyltransferase subfamily.

It is found in the cell inner membrane. It carries out the reaction heme b + (2E,6E)-farnesyl diphosphate + H2O = Fe(II)-heme o + diphosphate. It participates in porphyrin-containing compound metabolism; heme O biosynthesis; heme O from protoheme: step 1/1. Its function is as follows. Converts heme B (protoheme IX) to heme O by substitution of the vinyl group on carbon 2 of heme B porphyrin ring with a hydroxyethyl farnesyl side group. This Shewanella amazonensis (strain ATCC BAA-1098 / SB2B) protein is Protoheme IX farnesyltransferase.